The following is a 258-amino-acid chain: Deoxyribose-phosphate aldolase 2 (258 aa).

Residue D102 is the Proton donor/acceptor of the active site. K165 acts as the Schiff-base intermediate with acetaldehyde in catalysis. The active-site Proton donor/acceptor is K199.

The protein belongs to the DeoC/FbaB aldolase family. DeoC type 2 subfamily.

Its subcellular location is the cytoplasm. It carries out the reaction 2-deoxy-D-ribose 5-phosphate = D-glyceraldehyde 3-phosphate + acetaldehyde. It participates in carbohydrate degradation; 2-deoxy-D-ribose 1-phosphate degradation; D-glyceraldehyde 3-phosphate and acetaldehyde from 2-deoxy-alpha-D-ribose 1-phosphate: step 2/2. Functionally, catalyzes a reversible aldol reaction between acetaldehyde and D-glyceraldehyde 3-phosphate to generate 2-deoxy-D-ribose 5-phosphate. This is Deoxyribose-phosphate aldolase 2 (deoC2) from Vibrio vulnificus (strain YJ016).